The chain runs to 107 residues: DNA polymerase delta subunit 4 (107 aa).

Positions 1 to 16 match the PCNA-interaction protein motif (PIP box) motif; sequence MGRKRLITDSYPVVKR. Residues 1–44 form a disordered region; sequence MGRKRLITDSYPVVKRREGPAGHSKGELAPELGEEPQPRDEEEA. Residues 15–28 show a composition bias toward basic and acidic residues; it reads KRREGPAGHSKGEL.

It belongs to the DNA polymerase delta subunit 4 family. As to quaternary structure, component of the tetrameric DNA polymerase delta complex (Pol-delta4), which consists of POLD1/p125, POLD2/p50, POLD3/p66/p68 and POLD4/p12, with POLD1 bearing DNA polymerase and 3' to 5' proofreading exonuclease activities. Within this complex, directly interacts with POLD1 and POLD2. Directly interacts with PCNA, as do POLD1 and POLD3; this interaction stimulates Pol-delta4 polymerase activity. As POLD1 and POLD2, directly interacts with WRNIP1; this interaction stimulates DNA polymerase delta-mediated DNA synthesis, independently of the presence of PCNA. This stimulation may be due predominantly to an increase of initiation frequency and also to increased processivity. Upon genotoxic stress induced by DNA damaging agents or by replication stress, POLD4 is proteolytically degraded and Pol-delta4 is converted into a trimeric form of the complex (Pol-delta3) which has an increased proofreading activity. The DNA polymerase delta complex interacts with POLDIP2; this interaction is probably mediated through direct binding to POLD2. In terms of processing, ubiquitinated; undergoes 'Lys-48'-linked ubiquitination in response to UV irradiation, leading to proteasomal degradation. This modification is partly mediated by RNF8 and by the DCX(DTL) E3 ubiquitin ligase complex (also called CRL4(CDT2)). Efficient degradation requires the presence of PCNA and is required for the inhibition of fork progression after DNA damage.

It localises to the nucleus. Its function is as follows. As a component of the tetrameric DNA polymerase delta complex (Pol-delta4), plays a role in high fidelity genome replication and repair. Within this complex, increases the rate of DNA synthesis and decreases fidelity by regulating POLD1 polymerase and proofreading 3' to 5' exonuclease activity. Pol-delta4 participates in Okazaki fragment processing, through both the short flap pathway, as well as a nick translation system. Under conditions of DNA replication stress, required for the repair of broken replication forks through break-induced replication (BIR), a mechanism that may induce segmental genomic duplications of up to 200 kb. Involved in Pol-delta4 translesion synthesis (TLS) of templates carrying O6-methylguanine or abasic sites. Its degradation in response to DNA damage is required for the inhibition of fork progression and cell survival. In Homo sapiens (Human), this protein is DNA polymerase delta subunit 4 (POLD4).